The chain runs to 89 residues: Small ribosomal subunit protein uS15 (89 aa).

Positions 1-10 are enriched in basic and acidic residues; the sequence is MSITAERKAE. The interval 1-24 is disordered; it reads MSITAERKAEVIQGNANKAGDTGS.

This sequence belongs to the universal ribosomal protein uS15 family. In terms of assembly, part of the 30S ribosomal subunit. Forms a bridge to the 50S subunit in the 70S ribosome, contacting the 23S rRNA.

One of the primary rRNA binding proteins, it binds directly to 16S rRNA where it helps nucleate assembly of the platform of the 30S subunit by binding and bridging several RNA helices of the 16S rRNA. Its function is as follows. Forms an intersubunit bridge (bridge B4) with the 23S rRNA of the 50S subunit in the ribosome. This is Small ribosomal subunit protein uS15 from Rhodopseudomonas palustris (strain HaA2).